The following is a 155-amino-acid chain: MANLSQLMENEVFMAFASYTTIVLSKMNFMSTATAFYRLTKKVFANPEDCAGFGKGENAKKYLRTDDRVERVRRAHLNDLENIVPFLGIGLLYSLSGPDLSTAILHFRLFVRARIYHTIAYLTPLPQPNRALAFFIGYGVTLSMAYRLLKSKLYL.

The Lumenal segment spans residues 3-9 (NLSQLME). Residues 10–33 (NEVFMAFASYTTIVLSKMNFMSTA) traverse the membrane as a helical segment. The Cytoplasmic portion of the chain corresponds to 34–62 (TAFYRLTKKVFANPEDCAGFGKGENAKKY). Glutathione is bound at residue Arg38. Lys42, Lys55, and Lys60 each carry N6-acetyllysine. A helical transmembrane segment spans residues 63–96 (LRTDDRVERVRRAHLNDLENIVPFLGIGLLYSLS). Residues Arg73, Arg74, His76, and Glu81 each coordinate glutathione. At 97–99 (GPD) the chain is on the lumenal side. A helical membrane pass occupies residues 100-123 (LSTAILHFRLFVRARIYHTIAYLT). Residue Tyr121 coordinates glutathione. Residues 124 to 128 (PLPQP) lie on the Cytoplasmic side of the membrane. The chain crosses the membrane as a helical span at residues 129–148 (NRALAFFIGYGVTLSMAYRL). The Lumenal segment spans residues 149 to 155 (LKSKLYL).

It belongs to the MAPEG family. In terms of assembly, homotrimer; The trimer binds only one molecule of glutathione.

It is found in the endoplasmic reticulum membrane. The protein localises to the mitochondrion outer membrane. The enzyme catalyses RX + glutathione = an S-substituted glutathione + a halide anion + H(+). Its function is as follows. Conjugation of reduced glutathione to a wide number of exogenous and endogenous hydrophobic electrophiles. This chain is Microsomal glutathione S-transferase 1 (MGST1), found in Bos taurus (Bovine).